Here is a 214-residue protein sequence, read N- to C-terminus: Homologous-pairing protein 2 homolog (214 aa).

A coiled-coil region spans residues 79-147 (SDSELKDLDA…EHKLTNIKSA (69 aa)). Residues 115-179 (TSSLTTEEML…WKKRKRMATD (65 aa)) form a DNA-binding region.

The protein belongs to the HOP2 family.

The protein localises to the nucleus. Plays an important role in meiotic recombination. Stimulates DMC1-mediated strand exchange required for pairing of homologous chromosomes during meiosis. The protein is Homologous-pairing protein 2 homolog (psmc3ip) of Xenopus laevis (African clawed frog).